The chain runs to 2153 residues: Non-reducing polyketide synthase albA (2153 aa).

The tract at residues 8-244 (YLFGDQTSDI…VKAPIHGPYH (237 aa)) is N-terminal acylcarrier protein transacylase domain (SAT). The region spanning 375 to 806 (NSKIAIIGMS…GGNTALLLED (432 aa)) is the Ketosynthase family 3 (KS3) domain. Catalysis depends on for beta-ketoacyl synthase activity residues cysteine 547, histidine 682, and histidine 724. The interval 912–1232 (FVFTGQGAQY…LASLHLAGID (321 aa)) is malonyl-CoA:ACP transacylase (MAT) domain. Serine 1001 functions as the For acyl/malonyl transferase activity in the catalytic mechanism. Residues 1286–1425 (HEYLTTAAQK…CTVRFFDCAA (140 aa)) form an N-terminal hotdog fold region. The PKS/mFAS DH domain occupies 1286–1598 (HEYLTTAAQK…FQALSRKILD (313 aa)). The tract at residues 1290–1603 (TTAAQKVIET…RKILDTVLPP (314 aa)) is product template (PT) domain. Histidine 1326 serves as the catalytic Proton acceptor; for dehydratase activity. The tract at residues 1452–1598 (DAHRLGRGMV…FQALSRKILD (147 aa)) is C-terminal hotdog fold. The Proton donor; for dehydratase activity role is filled by aspartate 1511. Residues 1608–1643 (KGPARPAASAQKAAPAAAASKSRASAPAPAKPAAKP) are disordered. Residues 1610–1643 (PARPAASAQKAAPAAAASKSRASAPAPAKPAAKP) show a composition bias toward low complexity. Residues 1643–1720 (PSAPSLVKRA…DFKQFLAPMS (78 aa)) form the Carrier 1 domain. At serine 1680 the chain carries O-(pantetheine 4'-phosphoryl)serine. Residues 1720 to 1765 (SQGEASDGSTSDPESSSSFNGGSSTDESSAGSPVSSPPNEKVTQVE) form a disordered region. Positions 1725-1748 (SDGSTSDPESSSSFNGGSSTDESS) are enriched in low complexity. Residues 1749–1765 (AGSPVSSPPNEKVTQVE) show a composition bias toward polar residues. Residues 1764–1841 (VEQHATIKEI…DVEDALGLKP (78 aa)) form the Carrier 2 domain. Serine 1801 is modified (O-(pantetheine 4'-phosphoryl)serine). Positions 1879-2151 (SPHPRSTSIL…ELGSFIGNAM (273 aa)) are claisen cyclase domain. The For Claisen cyclase activity role is filled by serine 1969.

It catalyses the reaction 6 malonyl-CoA + acetyl-CoA + 6 H(+) = naphtopyrone YWA1 + 6 CO2 + 7 CoA + H2O. It participates in secondary metabolite biosynthesis. Non-reducing polyketide synthase; part of the gene cluster that mediates the biosynthesis of aurasperone B, a dimeric gamma-naphthopyrone. The first step in the biosynthesis of aurasperone B is the production of gamma-naphthopyrone precursor YWA1 by the non-reducing polyketide synthase albA, via condensation of one acetyl-CoA starter unit with 6 malonyl-CoA units. YWA1 is then methylated by aunE at position C-6 to yield foncesin which is further methylated at position C-8 by aunD to produce fonsecin B. A key enzyme in the biosynthetic pathway is the cytochrome P450 monooxygenase aunB which catalyzes the oxidative dimerization of fonsecin B to aurasperone B. AunB also catalyzes the oxidative dimerization of rubrofusarin B into aurasperone A. This chain is Non-reducing polyketide synthase albA, found in Aspergillus niger (strain ATCC MYA-4892 / CBS 513.88 / FGSC A1513).